Here is a 198-residue protein sequence, read N- to C-terminus: Angiopoietin-like protein 8 (198 aa).

The signal sequence occupies residues 1-21 (MPVPALCLLWALAMVTRPASA).

The protein belongs to the ANGPTL8 family. As to quaternary structure, interacts with ANGPTL3. Proteolytically cleaved at the N-terminus. Predominantly expressed in liver. Also expressed in adipose tissues.

Its subcellular location is the secreted. In terms of biological role, hormone that acts as a blood lipid regulator by regulating serum triglyceride levels. May be involved in the metabolic transition between fasting and refeeding: required to direct fatty acids to adipose tissue for storage in the fed state. In Homo sapiens (Human), this protein is Angiopoietin-like protein 8.